We begin with the raw amino-acid sequence, 331 residues long: Calcium-binding and coiled-coil domain-containing protein 2 (331 aa).

The short motif at 128 to 131 is the CLIR element; sequence IMVV. Residues 132-309 adopt a coiled-coil conformation; sequence INKEKVEEME…EKASWEKEKA (178 aa). The disordered stretch occupies residues 189–310; it reads KASWEKEKAS…KASWEKEKAP (122 aa). The short motif at 190-193 is the LIR-like element; the sequence is ASWE. The tract at residues 292–302 is interaction with LGALS8; that stretch reads KEKASWEEEKA.

It belongs to the CALCOCO family. In terms of assembly, dimer. Part of a complex consisting of CALCOCO2, TAX1BP1 and MYO6. Interacts with MYO6. Interacts with GEMIN4. Interacts with ATG8 family members MAP1LC3A, MAP1LC3B, GABARAP, GABARAPL1 and GABARAPL2. Interacts with ATG8 family member MAP1LC3C. Interacts with LGALS8. Interacts with TOM1; the interaction is indirect and is mediated by MYO6, which acts as a bridge between TOM1 and CALCOCO2. Interacts with AZI2.

The protein resides in the cytoplasm. Its subcellular location is the perinuclear region. It localises to the cytoskeleton. It is found in the cytoplasmic vesicle. The protein localises to the autophagosome membrane. Xenophagy-specific receptor required for autophagy-mediated intracellular bacteria degradation. Acts as an effector protein of galectin-sensed membrane damage that restricts the proliferation of infecting pathogens upon entry into the cytosol by targeting LGALS8-associated bacteria for autophagy. Initially orchestrates bacteria targeting to autophagosomes and subsequently ensures pathogen degradation by regulating pathogen-containing autophagosome maturation. Bacteria targeting to autophagosomes relies on its interaction with MAP1LC3A, MAP1LC3B and/or GABARAPL2, whereas regulation of pathogen-containing autophagosome maturation requires the interaction with MAP3LC3C. May play a role in ruffle formation and actin cytoskeleton organization and seems to negatively regulate constitutive secretion. This is Calcium-binding and coiled-coil domain-containing protein 2 from Mus musculus (Mouse).